A 1894-amino-acid chain; its full sequence is Adenylate kinase 9 (1894 aa).

Residues 32-286 are adenylate kinase 1; that stretch reads TCFIIFGKPG…LFMTVIERLK (255 aa). ATP is bound at residue 41 to 46; it reads GAGKTT. An NMP 1 region spans residues 61-90; it reads EALSVLEEHIAAEKETGAMLQSLLVSGHSI. 117–120 is a binding site for AMP; the sequence is EMPS. The LID 1 stretch occupies residues 161 to 206; sequence GQRQHSTTGYVYTREQWDPEIIESRRRKKRDFPKEGKSEEEEEEEE. Residues 188–211 are disordered; that stretch reads KKRDFPKEGKSEEEEEEEEQEEEE. Residues 198-211 are compositionally biased toward acidic residues; sequence SEEEEEEEEQEEEE. Arg230 contacts AMP. Residues 451 to 478 adopt a coiled-coil conformation; the sequence is IKVVQQRLLNEKQAKQQEERTLKELQVQ. A disordered region spans residues 492–533; sequence SEELPSLENTGSKLSSLEIGQEDKSKSETTITGDQVKDVSTE. The stretch at 651–691 forms a coiled coil; that stretch reads LERLQEEAQAKKREEEEIRKVKEEELRLEEEKQRLMELATK. 2 disordered regions span residues 710 to 789 and 876 to 911; these read PYPD…LGSE and EEEA…EKRR. Acidic residues predominate over residues 715–736; the sequence is PDNEAEEEVEDSEIHEESEAQE. Composition is skewed to basic and acidic residues over residues 757-768 and 777-789; these read EGDHEPEAEFKP and ETEK…LGSE. Acidic residues predominate over residues 876–903; sequence EEEAEDYQAETEIDEEQEEEEEEEEEGE. Positions 976–1187 are adenylate kinase 2; the sequence is LRICLLGPHG…VAKRRAELIL (212 aa). Residue 985–990 participates in ATP binding; sequence GSGKTV. The tract at residues 1005–1036 is NMP 2; sequence QFDEFLQEKMLLKAERKFGPEFEDDSEEEQLV. Residues 1034 to 1036 and 1063 to 1066 contribute to the AMP site; these read QLV and VQLT. The LID 2 stretch occupies residues 1108–1128; that stretch reads DGFPRHPEEAQFLGERGFFPD. The segment covering 1223 to 1241 has biased composition (acidic residues); the sequence is EFPKDEEEMSEEDEEQEAD. The tract at residues 1223–1243 is disordered; that stretch reads EFPKDEEEMSEEDEEQEADAT. The segment at 1395 to 1584 is adenylate kinase 3; it reads VRIMIVGPPK…VWNEVLKDIQ (190 aa). 1404–1409 is a binding site for ATP; sequence KSGKTT. The interval 1424-1455 is NMP 3; that stretch reads SVGDALRGMLNNHPDSELSLMLNWHLHKGKTV. AMP contacts are provided by residues Arg1430, 1482 to 1485, and Gln1489; that span reads GYPV. The LID 3 stretch occupies residues 1519–1533; that stretch reads LEKKTEQSMSYPLHN.

The protein belongs to the adenylate kinase family. In terms of tissue distribution, highly expressed in the testis.

The protein resides in the cytoplasm. It is found in the nucleus. It localises to the cell projection. The protein localises to the cilium. Its subcellular location is the flagellum. It catalyses the reaction a ribonucleoside 5'-phosphate + ATP = a ribonucleoside 5'-diphosphate + ADP. The enzyme catalyses AMP + ATP = 2 ADP. The catalysed reaction is GTP + AMP = GDP + ADP. It carries out the reaction CMP + ATP = CDP + ADP. It catalyses the reaction GTP + CMP = CDP + GDP. The enzyme catalyses dAMP + ATP = dADP + ADP. The catalysed reaction is dCMP + ATP = dCDP + ADP. It carries out the reaction a ribonucleoside 5'-diphosphate + ATP = a ribonucleoside 5'-triphosphate + ADP. It catalyses the reaction CDP + ATP = CTP + ADP. The enzyme catalyses CDP + GTP = CTP + GDP. The catalysed reaction is GDP + ATP = GTP + ADP. It carries out the reaction UDP + ATP = UTP + ADP. It catalyses the reaction GTP + UDP = UTP + GDP. The enzyme catalyses dTDP + GTP = dTTP + GDP. The catalysed reaction is dCDP + ATP = dCTP + ADP. It carries out the reaction dCDP + GTP = dCTP + GDP. It catalyses the reaction dGDP + ATP = dGTP + ADP. The enzyme catalyses dTDP + ATP = dTTP + ADP. The catalysed reaction is dADP + GTP = dATP + GDP. Functionally, broad-specificity nucleoside phosphate kinase involved in cellular nucleotide homeostasis by catalyzing nucleoside-phosphate interconversions. Similar to other adenylate kinases, preferentially catalyzes the phosphorylation of the nucleoside monophosphate AMP with ATP as phosphate donor to produce ADP. In vitro, can also catalyze the phosphorylation of CMP, dAMP and dCMP and use GTP as an alternate phosphate donor. Moreover, exhibits a diphosphate kinase activity, producing ATP, CTP, GTP, UTP, TTP, dATP, dCTP and dGTP from the corresponding diphosphate substrates with either ATP or GTP as phosphate donors. For this activity shows the following substrate preference CDP &gt; UDP &gt; ADP &gt; TDP. The polypeptide is Adenylate kinase 9 (Mus musculus (Mouse)).